Here is a 642-residue protein sequence, read N- to C-terminus: Threonine--tRNA ligase (642 aa).

The TGS domain maps to 1 to 61 (MPVITLPDGS…DTDSELSIIT (61 aa)). Residues 243 to 534 (DHRKIGKQLD…LIEEYAGKFP (292 aa)) are catalytic. Zn(2+) contacts are provided by C334, H385, and H511.

This sequence belongs to the class-II aminoacyl-tRNA synthetase family. Homodimer. The cofactor is Zn(2+).

The protein resides in the cytoplasm. It carries out the reaction tRNA(Thr) + L-threonine + ATP = L-threonyl-tRNA(Thr) + AMP + diphosphate + H(+). In terms of biological role, catalyzes the attachment of threonine to tRNA(Thr) in a two-step reaction: L-threonine is first activated by ATP to form Thr-AMP and then transferred to the acceptor end of tRNA(Thr). Also edits incorrectly charged L-seryl-tRNA(Thr). This Shewanella piezotolerans (strain WP3 / JCM 13877) protein is Threonine--tRNA ligase.